A 258-amino-acid polypeptide reads, in one-letter code: Na(+)-translocating NADH-quinone reductase subunit C (258 aa).

A helical membrane pass occupies residues 14-34 (LIVVLAVSLICSVIVAGAVVG). Ser-226 is modified (FMN phosphoryl serine).

The protein belongs to the NqrC family. Composed of six subunits; NqrA, NqrB, NqrC, NqrD, NqrE and NqrF. The cofactor is FMN.

It is found in the cell inner membrane. It catalyses the reaction a ubiquinone + n Na(+)(in) + NADH + H(+) = a ubiquinol + n Na(+)(out) + NAD(+). In terms of biological role, NQR complex catalyzes the reduction of ubiquinone-1 to ubiquinol by two successive reactions, coupled with the transport of Na(+) ions from the cytoplasm to the periplasm. NqrA to NqrE are probably involved in the second step, the conversion of ubisemiquinone to ubiquinol. This is Na(+)-translocating NADH-quinone reductase subunit C from Neisseria meningitidis serogroup B (strain ATCC BAA-335 / MC58).